Reading from the N-terminus, the 421-residue chain is D-amino acid dehydrogenase (421 aa).

An FAD-binding site is contributed by 3–17 (VTILGAGVIGVTSAY).

Belongs to the DadA oxidoreductase family. It depends on FAD as a cofactor.

It carries out the reaction a D-alpha-amino acid + A + H2O = a 2-oxocarboxylate + AH2 + NH4(+). It functions in the pathway amino-acid degradation; D-alanine degradation; NH(3) and pyruvate from D-alanine: step 1/1. Functionally, oxidative deamination of D-amino acids. The polypeptide is D-amino acid dehydrogenase (Allorhizobium ampelinum (strain ATCC BAA-846 / DSM 112012 / S4) (Agrobacterium vitis (strain S4))).